Reading from the N-terminus, the 1405-residue chain is DNA-directed RNA polymerase subunit beta' (1405 aa).

Cys70, Cys72, Cys85, and Cys88 together coordinate Zn(2+). Mg(2+) is bound by residues Asp460, Asp462, and Asp464. The Zn(2+) site is built by Cys814, Cys888, Cys895, and Cys898.

Belongs to the RNA polymerase beta' chain family. As to quaternary structure, the RNAP catalytic core consists of 2 alpha, 1 beta, 1 beta' and 1 omega subunit. When a sigma factor is associated with the core the holoenzyme is formed, which can initiate transcription. It depends on Mg(2+) as a cofactor. Zn(2+) serves as cofactor.

The catalysed reaction is RNA(n) + a ribonucleoside 5'-triphosphate = RNA(n+1) + diphosphate. In terms of biological role, DNA-dependent RNA polymerase catalyzes the transcription of DNA into RNA using the four ribonucleoside triphosphates as substrates. The polypeptide is DNA-directed RNA polymerase subunit beta' (Shewanella sp. (strain MR-7)).